The primary structure comprises 567 residues: Diacylglycerol kinase epsilon (567 aa).

A helical transmembrane segment spans residues 22–42 (LILWTLCSVLLPVFITFWCSL). Phorbol-ester/DAG-type zinc fingers lie at residues 59-108 (KHGW…RFQC) and 124-177 (PHHW…NEKC). Positions 215–356 (KQWTPLIILA…LDRWKVQVTN (142 aa)) constitute a DAGKc domain.

The protein belongs to the eukaryotic diacylglycerol kinase family. In terms of tissue distribution, expressed predominantly in testis. Expressed in endothelium, platelets and podocytes (at protein level).

Its subcellular location is the membrane. The protein resides in the cytoplasm. It carries out the reaction a 1,2-diacyl-sn-glycerol + ATP = a 1,2-diacyl-sn-glycero-3-phosphate + ADP + H(+). The catalysed reaction is 1-hexadecanoyl-2-(5Z,8Z,11Z,14Z-eicosatetraenoyl)-sn-glycerol + ATP = 1-hexadecanoyl-2-(5Z,8Z,11Z,14Z-eicosatetraenoyl)-sn-glycero-3-phosphate + ADP + H(+). The enzyme catalyses 1-octadecanoyl-2-(5Z,8Z,11Z,14Z-eicosatetraenoyl)-sn-glycerol + ATP = 1-octadecanoyl-2-(5Z,8Z,11Z,14Z-eicosatetraenoyl)-sn-glycero-3-phosphate + ADP + H(+). It catalyses the reaction 1-eicosanoyl-2-(5Z,8Z,11Z,14Z)-eicosatetraenoyl-sn-glycerol + ATP = 1-eicosanoyl-2-(5Z,8Z,11Z,14Z)-eicosatetraenoyl-sn-glycero-3-phosphate + ADP + H(+). It carries out the reaction 1,2-di-(5Z,8Z,11Z,14Z)-eicosatetraenoyl-sn-glycerol + ATP = 1,2-di-(5Z,8Z,11Z,14Z)-eicosatetraenoyl-sn-glycero-3-phosphate + ADP + H(+). The catalysed reaction is 1-octadecanoyl-2-(9Z,12Z)-octadecadienoyl-sn-glycerol + ATP = 1-octadecanoyl-2-(9Z,12Z-octadecadienoyl)-sn-glycero-3-phosphate + ADP + H(+). The enzyme catalyses 1,2-di-(9Z,12Z-octadecadienoyl)-sn-glycerol + ATP = 1,2-di-(9Z,12Z-octadecadienoyl)-sn-glycero-3-phosphate + ADP + H(+). It catalyses the reaction 1,2-di-(9Z-octadecenoyl)-sn-glycerol + ATP = 1,2-di-(9Z-octadecenoyl)-sn-glycero-3-phosphate + ADP + H(+). The protein operates within lipid metabolism; glycerolipid metabolism. With respect to regulation, undergoes competitive inhibition by its own product 1,2-diacyl-sn-glycero-3-phosphate/phosphatidic acid. The strongest inhibition being observed in vitro with 1-octadecanoyl-2-(5Z,8Z,11Z,14Z-eicosatetraenoyl)-sn-glycero-3-phosphate, a major intermediate in the phosphatidylinositol turnover cycle and more generally by diacylglycerols with an arachidonoyl acyl chain at the sn-2 position. Functionally, membrane-bound diacylglycerol kinase that converts diacylglycerol/DAG into phosphatidic acid/phosphatidate/PA and regulates the respective levels of these two bioactive lipids. Thereby, acts as a central switch between the signaling pathways activated by these second messengers with different cellular targets and opposite effects in numerous biological processes. Also plays an important role in the biosynthesis of complex lipids. Displays specificity for diacylglycerol substrates with an arachidonoyl acyl chain at the sn-2 position, with the highest activity toward 1-octadecanoyl-2-(5Z,8Z,11Z,14Z-eicosatetraenoyl)-sn-glycerol the main diacylglycerol intermediate within the phosphatidylinositol turnover cycle. Can also phosphorylate diacylglycerol substrates with a linoleoyl acyl chain at the sn-2 position but much less efficiently. The chain is Diacylglycerol kinase epsilon (DGKE) from Homo sapiens (Human).